Reading from the N-terminus, the 458-residue chain is Retinoic acid receptor RXR-beta (458 aa).

Residues 1-17 (GEAGRDGMGDTGRDSRS) are compositionally biased toward basic and acidic residues. Residues 1 to 105 (GEAGRDGMGD…GGSGPPEDVK (105 aa)) form a disordered region. Residues 1-129 (GEAGRDGMGD…PGGPGAGKRL (129 aa)) are modulating. Low complexity predominate over residues 18 to 31 (PDSSSPNPLSQGIP). The span at 32-56 (PSSPPGPPHTPSAPPPPMPPPPLGS) shows a compositional bias: pro residues. The segment covering 57-68 (PFPVISSSMGSP) has biased composition (low complexity). Over residues 69-78 (GLPPPAPPGF) the composition is skewed to pro residues. 2 NR C4-type zinc fingers span residues 130–150 (CAIC…CEGC) and 166–190 (CRDN…YQKC). The nuclear receptor DNA-binding region spans 130–195 (CAICGDRSSG…RYQKCLATGM (66 aa)). Positions 196 to 220 (KREAVQEERQRGKDKDGDGDGAGGA) are hinge. Residues 201 to 213 (QEERQRGKDKDGD) show a composition bias toward basic and acidic residues. 2 disordered regions span residues 201 to 223 (QEER…APEE) and 238 to 261 (QKSD…NDPV). Positions 221–454 (PEEMPVDRIL…TFLMEMLEAP (234 aa)) constitute an NR LBD domain. Positions 245 to 255 (EGPGATGGGGS) are enriched in gly residues.

It belongs to the nuclear hormone receptor family. NR2 subfamily. As to quaternary structure, homodimer (in vitro). Heterodimer with other retinoic acid receptor family members. Binds DNA preferentially as a RAR/RXR heterodimer. Interacts with NR1H3. Interacts with AKAP13. Expressed in the adrenal gland with main expression in the zona fasciculata (at protein level).

The protein localises to the nucleus. The protein resides in the cytoplasm. Functionally, receptor for retinoic acid. Retinoic acid receptors bind as heterodimers to their target response elements in response to their ligands, all-trans or 9-cis retinoic acid, and regulate gene expression in various biological processes. The RAR/RXR heterodimers bind to the retinoic acid response elements (RARE). The sequence is that of Retinoic acid receptor RXR-beta (Rxrb) from Rattus norvegicus (Rat).